A 112-amino-acid chain; its full sequence is Cryptic phage CTXphi transcriptional repressor RstR (112 aa).

Positions 7-61 constitute an HTH cro/C1-type domain; sequence LANQRKAINKTQAQMADEIGISLTSYKKYESGEGLPTMENLVKIADALEISIDEL. The H-T-H motif DNA-binding region spans 18-37; sequence QAQMADEIGISLTSYKKYES.

Its function is as follows. Transcriptional repressor of the integrated CTXPhi phage gene rstA2. The polypeptide is Cryptic phage CTXphi transcriptional repressor RstR (rstR1) (Vibrio cholerae serotype O1 (strain ATCC 39315 / El Tor Inaba N16961)).